A 1370-amino-acid polypeptide reads, in one-letter code: Histidine kinase P4 (1370 aa).

The N-terminal stretch at 1 to 20 is a signal peptide; that stretch reads MRNIGVFSVILFSFLAISLK. A helical membrane pass occupies residues 799-819; sequence WAFCLYALCIGTALIALISFL. Residues 852-1072 form the Histidine kinase domain; sequence NISHEFRTPL…IFRVSLPLGR (221 aa). Position 855 is a phosphohistidine; by autocatalysis (His855). The region spanning 1119-1234 is the Response regulatory domain; sequence TILIVEDHKP…EFRLRIKNIL (116 aa). The residue at position 1167 (Asp1167) is a 4-aspartylphosphate. In terms of domain architecture, HTH araC/xylS-type spans 1266 to 1365; sequence KKAFKIVEDN…NETPSQYQNR (100 aa). DNA-binding regions (H-T-H motif) lie at residues 1284 to 1305 and 1332 to 1355; these read LAFSQELGVSRTTLFNKIKAWT and ISQISYQVGFKSPKYFSKCFQKKF.

In terms of processing, autophosphorylated. Activation requires a sequential transfer of a phosphate group from a His in the primary transmitter domain, to an Asp in the receiver domain and to a His in the secondary transmitter domain.

Its subcellular location is the membrane. It localises to the cell surface. It catalyses the reaction ATP + protein L-histidine = ADP + protein N-phospho-L-histidine.. Functionally, histidine kinase probably involved in ulvan degradation. Ulvan is the main polysaccharide component of the Ulvales (green seaweed) cell wall. It is composed of disaccharide building blocks comprising 3-sulfated rhamnose (Rha3S) linked to D-glucuronic acid (GlcA), L-iduronic acid (IduA), or D-xylose (Xyl). This is Histidine kinase P4 from Formosa agariphila (strain DSM 15362 / KCTC 12365 / LMG 23005 / KMM 3901 / M-2Alg 35-1).